The sequence spans 336 residues: Holliday junction branch migration complex subunit RuvB (336 aa).

The large ATPase domain (RuvB-L) stretch occupies residues 1–183; sequence MTEEHLTSQE…FGIVEHMQYY (183 aa). ATP is bound by residues L22, R23, G64, K67, T68, T69, 130-132, R173, Y183, and R220; that span reads EDF. T68 lines the Mg(2+) pocket. The tract at residues 184–254 is small ATPAse domain (RuvB-S); sequence QVEDLEKIIL…TTAMALKQLQ (71 aa). The interval 257 to 336 is head domain (RuvB-H); it reads SAGLDQTDRK…LNLPLPGEEE (80 aa). Residues R293 and R317 each contribute to the DNA site.

The protein belongs to the RuvB family. Homohexamer. Forms an RuvA(8)-RuvB(12)-Holliday junction (HJ) complex. HJ DNA is sandwiched between 2 RuvA tetramers; dsDNA enters through RuvA and exits via RuvB. An RuvB hexamer assembles on each DNA strand where it exits the tetramer. Each RuvB hexamer is contacted by two RuvA subunits (via domain III) on 2 adjacent RuvB subunits; this complex drives branch migration. In the full resolvosome a probable DNA-RuvA(4)-RuvB(12)-RuvC(2) complex forms which resolves the HJ.

It is found in the cytoplasm. The catalysed reaction is ATP + H2O = ADP + phosphate + H(+). In terms of biological role, the RuvA-RuvB-RuvC complex processes Holliday junction (HJ) DNA during genetic recombination and DNA repair, while the RuvA-RuvB complex plays an important role in the rescue of blocked DNA replication forks via replication fork reversal (RFR). RuvA specifically binds to HJ cruciform DNA, conferring on it an open structure. The RuvB hexamer acts as an ATP-dependent pump, pulling dsDNA into and through the RuvAB complex. RuvB forms 2 homohexamers on either side of HJ DNA bound by 1 or 2 RuvA tetramers; 4 subunits per hexamer contact DNA at a time. Coordinated motions by a converter formed by DNA-disengaged RuvB subunits stimulates ATP hydrolysis and nucleotide exchange. Immobilization of the converter enables RuvB to convert the ATP-contained energy into a lever motion, pulling 2 nucleotides of DNA out of the RuvA tetramer per ATP hydrolyzed, thus driving DNA branch migration. The RuvB motors rotate together with the DNA substrate, which together with the progressing nucleotide cycle form the mechanistic basis for DNA recombination by continuous HJ branch migration. Branch migration allows RuvC to scan DNA until it finds its consensus sequence, where it cleaves and resolves cruciform DNA. The chain is Holliday junction branch migration complex subunit RuvB from Lactobacillus delbrueckii subsp. bulgaricus (strain ATCC 11842 / DSM 20081 / BCRC 10696 / JCM 1002 / NBRC 13953 / NCIMB 11778 / NCTC 12712 / WDCM 00102 / Lb 14).